The primary structure comprises 178 residues: ATP synthase subunit delta (178 aa).

Belongs to the ATPase delta chain family. In terms of assembly, F-type ATPases have 2 components, F(1) - the catalytic core - and F(0) - the membrane proton channel. F(1) has five subunits: alpha(3), beta(3), gamma(1), delta(1), epsilon(1). F(0) has three main subunits: a(1), b(2) and c(10-14). The alpha and beta chains form an alternating ring which encloses part of the gamma chain. F(1) is attached to F(0) by a central stalk formed by the gamma and epsilon chains, while a peripheral stalk is formed by the delta and b chains.

Its subcellular location is the cell inner membrane. Its function is as follows. F(1)F(0) ATP synthase produces ATP from ADP in the presence of a proton or sodium gradient. F-type ATPases consist of two structural domains, F(1) containing the extramembraneous catalytic core and F(0) containing the membrane proton channel, linked together by a central stalk and a peripheral stalk. During catalysis, ATP synthesis in the catalytic domain of F(1) is coupled via a rotary mechanism of the central stalk subunits to proton translocation. In terms of biological role, this protein is part of the stalk that links CF(0) to CF(1). It either transmits conformational changes from CF(0) to CF(1) or is implicated in proton conduction. This is ATP synthase subunit delta from Aromatoleum aromaticum (strain DSM 19018 / LMG 30748 / EbN1) (Azoarcus sp. (strain EbN1)).